The chain runs to 320 residues: Cytosolic Fe-S cluster assembly factor NUBP1 (320 aa).

Position 1 is an N-acetylmethionine (Met1). [4Fe-4S] cluster is bound by residues Cys8, Cys22, Cys25, and Cys31. Gly62–Ser69 lines the ATP pocket. [4Fe-4S] cluster contacts are provided by Cys235 and Cys238.

This sequence belongs to the Mrp/NBP35 ATP-binding proteins family. NUBP1/NBP35 subfamily. Heterotetramer of 2 NUBP1 and 2 NUBP2 chains. Interacts with KIFC1. Interacts with the BBS/CCT complex subunit CCT1. It depends on [4Fe-4S] cluster as a cofactor.

Its subcellular location is the cytoplasm. It is found in the nucleus. The protein resides in the cell projection. It localises to the cytoskeleton. The protein localises to the cilium axoneme. Its subcellular location is the cilium basal body. It is found in the microtubule organizing center. The protein resides in the centrosome. It localises to the centriole. Component of the cytosolic iron-sulfur (Fe/S) protein assembly (CIA) machinery. Required for maturation of extramitochondrial Fe-S proteins. The NUBP1-NUBP2 heterotetramer forms a Fe-S scaffold complex, mediating the de novo assembly of an Fe-S cluster and its transfer to target apoproteins. Implicated in the regulation of centrosome duplication. Negatively regulates cilium formation and structure. The polypeptide is Cytosolic Fe-S cluster assembly factor NUBP1 (Bos taurus (Bovine)).